We begin with the raw amino-acid sequence, 911 residues long: Epithelial discoidin domain-containing receptor 1 (911 aa).

The N-terminal stretch at 1–19 is a signal peptide; the sequence is MGTGTLSSLLLLLLLVTIG. Residues 22–415 lie on the Extracellular side of the membrane; the sequence is DMKGHFDPAK…VAKAEGSPTA (394 aa). Residues 32-186 enclose the F5/8 type C domain; sequence CRYALGMQDR…VCLRVELYGC (155 aa). Intrachain disulfides connect cysteine 32/cysteine 186 and cysteine 75/cysteine 178. Residues 193-369 form a DS-like domain region; that stretch reads LSYTAPVGQT…LFSEISFISD (177 aa). The Ca(2+) site is built by asparagine 213, glutamine 232, aspartate 235, valine 237, tyrosine 255, and tyrosine 257. Asparagine 213 carries an N-linked (GlcNAc...) asparagine glycan. An N-linked (GlcNAc...) asparagine glycan is attached at asparagine 262. Cysteine 305 and cysteine 350 are disulfide-bonded. Positions 362 and 363 each coordinate Ca(2+). 2 N-linked (GlcNAc...) asparagine glycosylation sites follow: asparagine 372 and asparagine 392. Residues 416–436 traverse the membrane as a helical segment; that stretch reads ILIGCLVAIILLLLLIIALML. Residues 437–911 lie on the Cytoplasmic side of the membrane; it reads WRLHWRRLLS…FLADDALNTV (475 aa). A disordered region spans residues 468-496; the sequence is ILINNRPGPREPPPYQEPRPRGTPPHSAP. The segment covering 477-494 has biased composition (pro residues); sequence REPPPYQEPRPRGTPPHS. The PPxY motif signature appears at 479 to 482; it reads PPPY. A phosphotyrosine; by autocatalysis mark is found at tyrosine 482, tyrosine 511, and tyrosine 518. Residues 608 to 903 form the Protein kinase domain; it reads LRFKEKLGEG…PPFAQLHRFL (296 aa). Residues 614–622 and lysine 653 contribute to the ATP site; that span reads LGEGQFGEV. Tyrosine 738 carries the post-translational modification Phosphotyrosine; by autocatalysis. Aspartate 764 (proton acceptor) is an active-site residue. Phosphotyrosine; by autocatalysis occurs at positions 790, 794, and 795.

Belongs to the protein kinase superfamily. Tyr protein kinase family. Insulin receptor subfamily. Homodimer. Interacts (via PPxY motif) with WWC1 (via WW domains) in a collagen-regulated manner. Forms a tripartite complex with WWC1 and PRKCZ, but predominantly in the absence of collagen. Interacts (tyrosine phosphorylated) with SHC1. Interacts with SRC. Interacts with MYH9. Interacts with CDH1. Interacts with PTPN11. Interacts with NCK2. Post-translationally, autophosphorylated in response to fibrillar collagen binding. In terms of tissue distribution, detected in the cochlea and the organ of Corti in the inner ear. Isoform 1 is predominant and is expressed in developing embryo and adult brain. Isoform 2 is expressed in various epithelial cells.

The protein localises to the cell membrane. The catalysed reaction is L-tyrosyl-[protein] + ATP = O-phospho-L-tyrosyl-[protein] + ADP + H(+). Functionally, tyrosine kinase that functions as a cell surface receptor for fibrillar collagen and regulates cell attachment to the extracellular matrix, remodeling of the extracellular matrix, cell migration, differentiation, survival and cell proliferation. Collagen binding triggers a signaling pathway that involves SRC and leads to the activation of MAP kinases. Regulates remodeling of the extracellular matrix by up-regulation of the matrix metalloproteinases MMP2, MMP7 and MMP9, and thereby facilitates cell migration and wound healing, but also tumor cell invasion. Promotes smooth muscle cell migration, and thereby contributes to arterial wound healing. Phosphorylates PTPN11. Required for normal blastocyst implantation during pregnancy, for normal mammary gland differentiation and normal lactation. Required for normal ear morphology and normal hearing. This Mus musculus (Mouse) protein is Epithelial discoidin domain-containing receptor 1 (Ddr1).